Reading from the N-terminus, the 633-residue chain is DNA-directed RNA polymerase subunit gamma (633 aa).

Cys74, Cys76, Cys89, and Cys92 together coordinate Zn(2+). Positions 471, 473, and 475 each coordinate Mg(2+).

It belongs to the RNA polymerase beta' chain family. RpoC1 subfamily. In cyanobacteria the RNAP catalytic core is composed of 2 alpha, 1 beta, 1 beta', 1 gamma and 1 omega subunit. When a sigma factor is associated with the core the holoenzyme is formed, which can initiate transcription. The cofactor is Mg(2+). Zn(2+) is required as a cofactor.

The enzyme catalyses RNA(n) + a ribonucleoside 5'-triphosphate = RNA(n+1) + diphosphate. In terms of biological role, DNA-dependent RNA polymerase catalyzes the transcription of DNA into RNA using the four ribonucleoside triphosphates as substrates. In Prochlorococcus marinus (strain MIT 9211), this protein is DNA-directed RNA polymerase subunit gamma.